We begin with the raw amino-acid sequence, 134 residues long: Phosphoribosyl-AMP cyclohydrolase (134 aa).

Aspartate 93 serves as a coordination point for Mg(2+). Zn(2+) is bound at residue cysteine 94. Positions 95 and 97 each coordinate Mg(2+). Zn(2+) contacts are provided by cysteine 112 and cysteine 119.

This sequence belongs to the PRA-CH family. In terms of assembly, homodimer. The cofactor is Mg(2+). Requires Zn(2+) as cofactor.

It is found in the cytoplasm. The catalysed reaction is 1-(5-phospho-beta-D-ribosyl)-5'-AMP + H2O = 1-(5-phospho-beta-D-ribosyl)-5-[(5-phospho-beta-D-ribosylamino)methylideneamino]imidazole-4-carboxamide. It participates in amino-acid biosynthesis; L-histidine biosynthesis; L-histidine from 5-phospho-alpha-D-ribose 1-diphosphate: step 3/9. Its function is as follows. Catalyzes the hydrolysis of the adenine ring of phosphoribosyl-AMP. This chain is Phosphoribosyl-AMP cyclohydrolase, found in Caulobacter sp. (strain K31).